The chain runs to 235 residues: tRNA (guanine-N(1)-)-methyltransferase (235 aa).

Residues Gly112 and 132 to 137 (LGDFVL) each bind S-adenosyl-L-methionine.

This sequence belongs to the RNA methyltransferase TrmD family. Homodimer.

It is found in the cytoplasm. The enzyme catalyses guanosine(37) in tRNA + S-adenosyl-L-methionine = N(1)-methylguanosine(37) in tRNA + S-adenosyl-L-homocysteine + H(+). Specifically methylates guanosine-37 in various tRNAs. The polypeptide is tRNA (guanine-N(1)-)-methyltransferase (Acaryochloris marina (strain MBIC 11017)).